The following is a 533-amino-acid chain: MSTTTLDAAVIGTGVAGLYELHMLREQGLEVRAYDKASGVGGTWYWNRYPGARFDSEAYIYQYLFDEDLYKGWSWSQRFPGQEEIERWLNYVADSLDLRRDISLETEITSAVFDEDRNRWTLTTADGDTIDAQFLITCCGMLSAPMKDLFPGQSDFGGQLVHTARWPKEGIDFAGKRVGVIGNGATGIQVIQSIAADVDELKVFIRTPQYALPMKNPSYGPDEVAWYKSRFGELKDTLPHTFTGFEYDFTDAWEDLTPEQRRARLEDDYENGSLKLWLASFAEIFSDEQVSEEVSEFVREKMRARLVDPELCDLLIPSDYGFGTHRVPLETNYLEVYHRDNVTAVLVRDNPITRIRENGIELADGTVHELDVIIMATGFDAGTGALTRIDIRGRDGRTLADDWSRDIRTTMGLMVHGYPNMLTTAVPLAPSAALCNMTTCLQQQTEWISEAIRHLRATGKTVIEPTAEGEEAWVAHHDELADANLISKTNSWYVGSNVPGKPRRVLSYVGGVGAYRDATLEAAAAGYKGFALS.

FAD is bound by residues 43–46, 55–56, and Tyr-61; these read TWYW and DS. Residue 53-55 coordinates NADP(+); sequence RFD. NADP(+) contacts are provided by residues 183-189, 206-207, and Trp-492; these read NGATGIQ and RT.

Belongs to the FAD-binding monooxygenase family. In terms of assembly, homotetramer. The cofactor is FAD.

It catalyses the reaction acetone + NADPH + O2 + H(+) = methyl acetate + NADP(+) + H2O. Functionally, plays an important role in the metabolism of acetone derived from propane oxidation. Catalyzes the oxidation of acetone to methyl acetate. Exhibits high catalytic efficiency towards various linear and cyclic ketones, such as butanone, 2-pentanone, 2-heptanone, 2-octanone, 2-nonanone, 2-decanone, cyclobutanone, cyclopentanone and cyclohexanone. Elicits the highest catalytic efficiency towards butanone and cyclobutanone. Is highly specific for NADPH and cannot use NADH. This chain is Acetone monooxygenase (methyl acetate-forming), found in Gordonia sp. (strain TY-5).